Here is a 336-residue protein sequence, read N- to C-terminus: Lipoyl synthase (336 aa).

Positions 81, 86, 92, 107, 111, 114, and 323 each coordinate [4Fe-4S] cluster. The Radical SAM core domain maps to 93–312 (FGHGTATFMI…EDYGYELGFS (220 aa)).

This sequence belongs to the radical SAM superfamily. Lipoyl synthase family. It depends on [4Fe-4S] cluster as a cofactor.

It is found in the cytoplasm. The enzyme catalyses [[Fe-S] cluster scaffold protein carrying a second [4Fe-4S](2+) cluster] + N(6)-octanoyl-L-lysyl-[protein] + 2 oxidized [2Fe-2S]-[ferredoxin] + 2 S-adenosyl-L-methionine + 4 H(+) = [[Fe-S] cluster scaffold protein] + N(6)-[(R)-dihydrolipoyl]-L-lysyl-[protein] + 4 Fe(3+) + 2 hydrogen sulfide + 2 5'-deoxyadenosine + 2 L-methionine + 2 reduced [2Fe-2S]-[ferredoxin]. Its pathway is protein modification; protein lipoylation via endogenous pathway; protein N(6)-(lipoyl)lysine from octanoyl-[acyl-carrier-protein]: step 2/2. In terms of biological role, catalyzes the radical-mediated insertion of two sulfur atoms into the C-6 and C-8 positions of the octanoyl moiety bound to the lipoyl domains of lipoate-dependent enzymes, thereby converting the octanoylated domains into lipoylated derivatives. The polypeptide is Lipoyl synthase (Stenotrophomonas maltophilia (strain K279a)).